The chain runs to 1460 residues: Venom prothrombin activator pseutarin-C non-catalytic subunit (1460 aa).

Positions 1–30 (MGRYSVSPVPKCLLLMFLGWSGLKYYQVNA) are cleaved as a signal peptide. Residues 32-196 (QLREYHIAAQ…SGLIGALLIC (165 aa)) enclose the Plastocyanin-like 1 domain. F5/8 type A domains follow at residues 32 to 330 (QLRE…LNIK) and 351 to 685 (KNWE…FLDA). The Ca(2+) site is built by lysine 124, glutamate 139, aspartate 142, and aspartate 143. N-linked (GlcNAc...) asparagine glycosylation is present at asparagine 156. Cysteine 170 and cysteine 196 form a disulfide bridge. N-linked (GlcNAc...) asparagine glycosylation is found at asparagine 204 and asparagine 242. 3 Plastocyanin-like domains span residues 206–330 (SQKF…LNIK), 351–529 (KNWE…LLVC), and 539–685 (VQNK…FLDA). Residues cysteine 251 and cysteine 332 are joined by a disulfide bond. Asparagine 406 and asparagine 471 each carry an N-linked (GlcNAc...) asparagine glycan. Cysteine 503 and cysteine 529 are disulfide-bonded. An N-linked (GlcNAc...) asparagine glycan is attached at asparagine 557. 4 cysteine pairs are disulfide-bonded: cysteine 672/cysteine 1032, cysteine 966/cysteine 992, cysteine 1147/cysteine 1298, and cysteine 1303/cysteine 1457. A b region spans residues 693 to 818 (GNEEEEEDDG…PDDIAGRYLR (126 aa)). A propeptide spans 773–818 (SFKGSVAEEELKHTALALEEDAHASDPRIDSNSARNPDDIAGRYLR) (activation peptide (connecting region)). Plastocyanin-like domains follow at residues 824–992 (NKRR…ILIC) and 1001–1143 (NRTI…FTVI). One can recognise an F5/8 type A 3 domain in the interval 824–1143 (NKRRYYIAAE…RGMQALFTVI (320 aa)). Ca(2+) contacts are provided by lysine 920, phenylalanine 935, aspartate 938, and aspartate 939. The N-linked (GlcNAc...) asparagine glycan is linked to asparagine 944. Residues asparagine 1001 and asparagine 1180 are each glycosylated (N-linked (GlcNAc...) asparagine). 2 F5/8 type C domains span residues 1147–1298 (CKLP…LLGC) and 1303–1457 (CSVP…LFGC).

The protein belongs to the multicopper oxidase family. Heterodimer of a light and a heavy chains; non-disulfide-linked. The interaction between the two chains is calcium-dependent. Found in its active form associated with pseutarin-C catalytic subunit (AC Q56VR3). In physiological conditions, blood coagulation factor V and factor Va are inactivated by activated protein C (APC) through proteolytic degradation of the heavy chain. However, pseutarin-C non-catalytic subunit (factor V-like protein) retains its full activity even at high concentration of APC. This has two explanations: this protein has only one of the three cleavage sites present in factor V that are targeted by the APC for inactivation, and the binding with the catalytic subunit protect the cleavage site from inactivation. In terms of tissue distribution, expressed by the venom gland.

It localises to the secreted. Its function is as follows. Snake prothrombin activator that attacks the hemostatic system of prey. This non-catalytic subunit is functionally similar to blood coagulation factor V. It serves as a critical cofactor for the prothrombinase activity of the catalytic subunit, which is similar to the blood coagulation factor X. The complex converts prothrombin to thrombin by sequential cleavage at two positions, Arg-320 followed by Arg-271. Cleavage at Arg-320 produces an active intermediate known as meizothrombin. Meizothrombin is the 'second' substrate for prothrombinase, and it docks in an altered manner to present the second cleavage site (271). Cleavage at Arg-271 releases active thrombin from its pro-fragment. This order of events is reversed if the protease component of prothrombinase is used on its own, suggesting that the 271 site is inherently more accessible to proteolysis. The complex converts prothrombin to thrombin in presence but also in the absence of membrane. The protein is Venom prothrombin activator pseutarin-C non-catalytic subunit of Pseudonaja textilis (Eastern brown snake).